The following is a 295-amino-acid chain: Shikimate dehydrogenase (NADP(+)) (295 aa).

Residues 20 to 22 (SWS) and Thr-68 each bind shikimate. Lys-72 (proton acceptor) is an active-site residue. 2 residues coordinate shikimate: Asn-93 and Asp-108. NADP(+) is bound by residues 132 to 136 (GNGGA) and Met-234. Tyr-236 provides a ligand contact to shikimate. An NADP(+)-binding site is contributed by Gly-257.

Belongs to the shikimate dehydrogenase family. As to quaternary structure, homodimer.

It catalyses the reaction shikimate + NADP(+) = 3-dehydroshikimate + NADPH + H(+). The protein operates within metabolic intermediate biosynthesis; chorismate biosynthesis; chorismate from D-erythrose 4-phosphate and phosphoenolpyruvate: step 4/7. Involved in the biosynthesis of the chorismate, which leads to the biosynthesis of aromatic amino acids. Catalyzes the reversible NADPH linked reduction of 3-dehydroshikimate (DHSA) to yield shikimate (SA). In Chlorobaculum tepidum (strain ATCC 49652 / DSM 12025 / NBRC 103806 / TLS) (Chlorobium tepidum), this protein is Shikimate dehydrogenase (NADP(+)).